The sequence spans 364 residues: Monocarboxylate 2-oxoacid-binding periplasmic protein all3028 (364 aa).

Residues 1 to 26 (MKRREVLNTAAIATATTALVSCTQTN) form the signal peptide. Substrate contacts are provided by residues 103–104 (YY), Q160, and R181. Na(+) is bound at residue Q160. The Na(+) site is built by E218, W219, and E244.

This sequence belongs to the bacterial solute-binding protein 7 family. In terms of assembly, homodimer. The complex comprises the extracytoplasmic solute receptor protein all3028, and the two putative transmembrane proteins alr3026 and alr3027.

The protein resides in the periplasm. Its activity is regulated as follows. Pyruvate uptake inhibited by 2-oxobutyrate, 2-oxovalerate, 2-oxoisovalerate, 2-oxoisocaproate and 2-oxo-3-methylvalerate. Its function is as follows. Part of the tripartite ATP-independent periplasmic (TRAP) transport system involved in the uptake of monocarboxylate 2-oxoacids. This protein specifically binds monocarboxylate 2-oxoacids including pyruvate, 2-oxobutyrate, 2-oxovalerate, 2-oxoisovalerate, 2-oxoisocaproate and 2-oxo-3-methylvalerate. Is not able to bind mannitol. The protein is Monocarboxylate 2-oxoacid-binding periplasmic protein all3028 of Nostoc sp. (strain PCC 7120 / SAG 25.82 / UTEX 2576).